Consider the following 269-residue polypeptide: Ribosomal RNA large subunit methyltransferase E (269 aa).

5 residues coordinate S-adenosyl-L-methionine: glycine 48, tryptophan 50, aspartate 68, aspartate 86, and aspartate 111. The Proton acceptor role is filled by lysine 151. Positions 198–256 constitute a TRAM domain; the sequence is PVAAGDRIEVTVEERGDEGDGIAYVEGYSIFVSDADVGETVTVEVVDAKPRFGFATRVD.

The protein belongs to the class I-like SAM-binding methyltransferase superfamily. RNA methyltransferase RlmE family.

The protein resides in the cytoplasm. It catalyses the reaction uridine(2552) in 23S rRNA + S-adenosyl-L-methionine = 2'-O-methyluridine(2552) in 23S rRNA + S-adenosyl-L-homocysteine + H(+). Functionally, specifically methylates the uridine in position 2552 of 23S rRNA at the 2'-O position of the ribose in the fully assembled 50S ribosomal subunit. This Halorubrum lacusprofundi (strain ATCC 49239 / DSM 5036 / JCM 8891 / ACAM 34) protein is Ribosomal RNA large subunit methyltransferase E.